We begin with the raw amino-acid sequence, 130 residues long: Small ribosomal subunit protein bS6 (130 aa).

The segment at 100-130 (SPMVKAKDERRERREDFAEAGDDVEAGDSEE) is disordered. Over residues 104 to 116 (KAKDERRERREDF) the composition is skewed to basic and acidic residues. Residues 117–130 (AEAGDDVEAGDSEE) show a composition bias toward acidic residues.

This sequence belongs to the bacterial ribosomal protein bS6 family.

Binds together with bS18 to 16S ribosomal RNA. This Pectobacterium atrosepticum (strain SCRI 1043 / ATCC BAA-672) (Erwinia carotovora subsp. atroseptica) protein is Small ribosomal subunit protein bS6.